The following is a 184-amino-acid chain: Intraflagellar transport protein 22 homolog (184 aa).

GTP is bound by residues 10–17 (GPTESGKT), 62–66 (DCGGD), and 122–125 (KKPG).

It belongs to the small GTPase superfamily. Rab family.

This is Intraflagellar transport protein 22 homolog (ift22) from Xenopus tropicalis (Western clawed frog).